We begin with the raw amino-acid sequence, 375 residues long: Cell division protein ZapE (375 aa).

78 to 85 (GGVGRGKT) lines the ATP pocket.

This sequence belongs to the AFG1 ATPase family. ZapE subfamily. As to quaternary structure, interacts with FtsZ.

It localises to the cytoplasm. Functionally, reduces the stability of FtsZ polymers in the presence of ATP. This chain is Cell division protein ZapE, found in Escherichia coli O157:H7.